A 381-amino-acid chain; its full sequence is Putative heat shock protein HSP 90-beta 2 (381 aa).

3 residues coordinate ATP: Asn-46, Asp-88, and Lys-107. A compositionally biased stretch (basic and acidic residues) spans Lys-145–Asp-174. The disordered stretch occupies residues Lys-145–Lys-192. A Phosphoserine modification is found at Ser-177. Residues Glu-315–Lys-347 adopt a coiled-coil conformation.

The protein belongs to the heat shock protein 90 family. Homodimer.

It localises to the cytoplasm. In terms of biological role, putative molecular chaperone that may promote the maturation, structural maintenance and proper regulation of specific target proteins. This is Putative heat shock protein HSP 90-beta 2 (HSP90AB2P) from Homo sapiens (Human).